A 106-amino-acid chain; its full sequence is UPF0060 membrane protein Oant_2511 (106 aa).

Transmembrane regions (helical) follow at residues F3–W23, P30–I50, A60–A80, and R84–P104.

Belongs to the UPF0060 family.

The protein resides in the cell inner membrane. The polypeptide is UPF0060 membrane protein Oant_2511 (Brucella anthropi (strain ATCC 49188 / DSM 6882 / CCUG 24695 / JCM 21032 / LMG 3331 / NBRC 15819 / NCTC 12168 / Alc 37) (Ochrobactrum anthropi)).